The sequence spans 635 residues: Threonine--tRNA ligase (635 aa).

The TGS domain occupies 1–61 (MVSIRLPDGS…DHDASLAIVT (61 aa)). The catalytic stretch occupies residues 242 to 533 (DHRKLGKQLD…LIEHHAGAMP (292 aa)). Zn(2+) contacts are provided by Cys333, His384, and His510.

It belongs to the class-II aminoacyl-tRNA synthetase family. Homodimer. Zn(2+) serves as cofactor.

The protein resides in the cytoplasm. It catalyses the reaction tRNA(Thr) + L-threonine + ATP = L-threonyl-tRNA(Thr) + AMP + diphosphate + H(+). Catalyzes the attachment of threonine to tRNA(Thr) in a two-step reaction: L-threonine is first activated by ATP to form Thr-AMP and then transferred to the acceptor end of tRNA(Thr). Also edits incorrectly charged L-seryl-tRNA(Thr). The polypeptide is Threonine--tRNA ligase (Burkholderia multivorans (strain ATCC 17616 / 249)).